We begin with the raw amino-acid sequence, 200 residues long: Casparian strip membrane protein 2 (200 aa).

The Cytoplasmic segment spans residues 1–37 (MMKSDSVAIDVPESSSVAKRKAPFMANIRDENGGYKK). Residues 38 to 58 (GLAIFDFILRLGAIAAALGAA) traverse the membrane as a helical segment. Residues 59–88 (STMGTSDETLPFFTQFFQFNAGYDDFPTFQ) lie on the Extracellular side of the membrane. Residues 89–109 (FFVIAMAMVAGYLVLSLPFSI) form a helical membrane-spanning segment. At 110-121 (VSICRPHAAGPR) the chain is on the cytoplasmic side. The helical transmembrane segment at 122–142 (ILLFILDTVALTLNAAAGAAA) threads the bilayer. The Extracellular portion of the chain corresponds to 143–175 (ADIVYLAHNGNQTTNWLAICLQFGDFCREVSGS). Asn-153 carries an N-linked (GlcNAc...) asparagine glycan. A helical membrane pass occupies residues 176-196 (VVASFASVVILMVLVVMSGLA). Topologically, residues 197–200 (LRRY) are cytoplasmic.

This sequence belongs to the Casparian strip membrane proteins (CASP) family. Homodimer and heterodimers.

The protein localises to the cell membrane. Its function is as follows. Regulates membrane-cell wall junctions and localized cell wall deposition. Required for establishment of the Casparian strip membrane domain (CSD) and the subsequent formation of Casparian strips, a cell wall modification of the root endodermis that determines an apoplastic barrier between the intraorganismal apoplasm and the extraorganismal apoplasm and prevents lateral diffusion. This is Casparian strip membrane protein 2 from Ricinus communis (Castor bean).